A 115-amino-acid chain; its full sequence is ComG operon protein 5 (115 aa).

The propeptide at 1 to 7 is leader sequence; it reads MWRENKG. Position 8 is an N-methylphenylalanine (phenylalanine 8). Residues 13–31 form a helical membrane-spanning segment; sequence TMSALSLWLFVLLTVVPLW.

Post-translationally, processing of ComGE in competent cells requires ComC.

The protein localises to the cell membrane. It is found in the cell surface. Its function is as follows. Required for transformation and DNA binding. This Bacillus subtilis (strain 168) protein is ComG operon protein 5 (comGE).